Here is a 429-residue protein sequence, read N- to C-terminus: Tryptophan synthase beta chain 2 (429 aa).

Positions 18 to 40 (NINPDLPSPLPEPKNPEGGKNIE) are disordered. K110 carries the N6-(pyridoxal phosphate)lysine modification.

This sequence belongs to the TrpB family. In terms of assembly, tetramer of two alpha and two beta chains. It depends on pyridoxal 5'-phosphate as a cofactor.

The enzyme catalyses (1S,2R)-1-C-(indol-3-yl)glycerol 3-phosphate + L-serine = D-glyceraldehyde 3-phosphate + L-tryptophan + H2O. It participates in amino-acid biosynthesis; L-tryptophan biosynthesis; L-tryptophan from chorismate: step 5/5. Functionally, the beta subunit is responsible for the synthesis of L-tryptophan from indole and L-serine. The sequence is that of Tryptophan synthase beta chain 2 (trpB2) from Methanothermobacter thermautotrophicus (strain ATCC 29096 / DSM 1053 / JCM 10044 / NBRC 100330 / Delta H) (Methanobacterium thermoautotrophicum).